The sequence spans 343 residues: Phosphate acyltransferase (343 aa).

It belongs to the PlsX family. As to quaternary structure, homodimer. Probably interacts with PlsY.

The protein localises to the cytoplasm. The enzyme catalyses a fatty acyl-[ACP] + phosphate = an acyl phosphate + holo-[ACP]. The protein operates within lipid metabolism; phospholipid metabolism. Its function is as follows. Catalyzes the reversible formation of acyl-phosphate (acyl-PO(4)) from acyl-[acyl-carrier-protein] (acyl-ACP). This enzyme utilizes acyl-ACP as fatty acyl donor, but not acyl-CoA. The sequence is that of Phosphate acyltransferase from Acidovorax sp. (strain JS42).